Here is a 499-residue protein sequence, read N- to C-terminus: Proline--tRNA ligase (499 aa).

Positions Met1 to Ala17 are enriched in basic and acidic residues. The tract at residues Met1–Gly21 is disordered.

Belongs to the class-II aminoacyl-tRNA synthetase family. ProS type 3 subfamily. As to quaternary structure, homodimer.

It localises to the cytoplasm. The enzyme catalyses tRNA(Pro) + L-proline + ATP = L-prolyl-tRNA(Pro) + AMP + diphosphate. In terms of biological role, catalyzes the attachment of proline to tRNA(Pro) in a two-step reaction: proline is first activated by ATP to form Pro-AMP and then transferred to the acceptor end of tRNA(Pro). Can inadvertently accommodate and process cysteine. In Deinococcus radiodurans (strain ATCC 13939 / DSM 20539 / JCM 16871 / CCUG 27074 / LMG 4051 / NBRC 15346 / NCIMB 9279 / VKM B-1422 / R1), this protein is Proline--tRNA ligase (proS).